The sequence spans 426 residues: Citrate transporter (426 aa).

12 consecutive transmembrane segments (helical) span residues 1–21, 22–42, 59–79, 86–106, 137–157, 176–196, 232–252, 278–298, 318–338, 343–363, 377–397, and 406–426; these read MLAILGFVMMIVFMYLIMSNR, LSALIALIVVPIVFALISGFG, TGIMLLFAILYFGIMIDSGLF, ILSFVKGDPLKIAVGTAVLTM, LVLAGIAMLGSGVMNIIPWGG, PLIPAMIAGILWVIAVAYILG, LLTVALMAALITSLLPLPVLF, AGNALNVVSMVFAAGIFTGIL, AMGPHLPLITAIVSMPFTFFM, FYFGVLPIIAEAASAYGIDAA, LLSPLVPSTYLLVGMAGVSFG, and WAVGTTIVMTIAALLIGIISF.

This sequence belongs to the CitM (TC 2.A.11) transporter family.

It is found in the cell membrane. In terms of biological role, transports the free citrate anion. Probably cotransports citrate and at least three or four protons. The citrate uptake is inhibited by the presence of magnesium ions. In Bacillus subtilis (strain 168), this protein is Citrate transporter (citN).